The primary structure comprises 98 residues: Small ribosomal subunit protein bS6 (98 aa).

This sequence belongs to the bacterial ribosomal protein bS6 family.

Functionally, binds together with bS18 to 16S ribosomal RNA. In Lactobacillus acidophilus (strain ATCC 700396 / NCK56 / N2 / NCFM), this protein is Small ribosomal subunit protein bS6.